Here is a 214-residue protein sequence, read N- to C-terminus: Peptide methionine sulfoxide reductase MsrA 2 (214 aa).

Cys45 is an active-site residue.

This sequence belongs to the MsrA Met sulfoxide reductase family.

The enzyme catalyses L-methionyl-[protein] + [thioredoxin]-disulfide + H2O = L-methionyl-(S)-S-oxide-[protein] + [thioredoxin]-dithiol. It catalyses the reaction [thioredoxin]-disulfide + L-methionine + H2O = L-methionine (S)-S-oxide + [thioredoxin]-dithiol. Functionally, has an important function as a repair enzyme for proteins that have been inactivated by oxidation. Catalyzes the reversible oxidation-reduction of methionine sulfoxide in proteins to methionine. The sequence is that of Peptide methionine sulfoxide reductase MsrA 2 (msrA2) from Synechocystis sp. (strain ATCC 27184 / PCC 6803 / Kazusa).